Here is a 437-residue protein sequence, read N- to C-terminus: Arginine biosynthesis bifunctional protein ArgJ, mitochondrial (437 aa).

Thr-173, Lys-200, Thr-211, Glu-297, Asn-432, and Ser-437 together coordinate substrate. The active-site Nucleophile is Thr-211.

It belongs to the ArgJ family. In terms of assembly, heterodimer of an alpha and a beta chain. The alpha and beta chains are autoproteolytically processed from a single precursor protein within the mitochondrion.

The protein resides in the mitochondrion matrix. The enzyme catalyses N(2)-acetyl-L-ornithine + L-glutamate = N-acetyl-L-glutamate + L-ornithine. It catalyses the reaction L-glutamate + acetyl-CoA = N-acetyl-L-glutamate + CoA + H(+). It participates in amino-acid biosynthesis; L-arginine biosynthesis; L-ornithine and N-acetyl-L-glutamate from L-glutamate and N(2)-acetyl-L-ornithine (cyclic): step 1/1. It functions in the pathway amino-acid biosynthesis; L-arginine biosynthesis; N(2)-acetyl-L-ornithine from L-glutamate: step 1/4. Its function is as follows. Catalyzes two activities which are involved in the cyclic version of arginine biosynthesis: the synthesis of acetylglutamate from glutamate and acetyl-CoA, and of ornithine by transacetylation between acetylornithine and glutamate. The protein is Arginine biosynthesis bifunctional protein ArgJ, mitochondrial of Zygosaccharomyces rouxii (strain ATCC 2623 / CBS 732 / NBRC 1130 / NCYC 568 / NRRL Y-229).